The chain runs to 321 residues: Probable arabinan endo-1,5-alpha-L-arabinosidase A (321 aa).

Residues 1-19 form the signal peptide; sequence MHPSTFVTTIACLAGLAHG. Aspartate 34 acts as the Proton acceptor in catalysis. Residue glutamate 200 is the Proton donor of the active site.

The protein belongs to the glycosyl hydrolase 43 family.

It is found in the secreted. It carries out the reaction Endohydrolysis of (1-&gt;5)-alpha-arabinofuranosidic linkages in (1-&gt;5)-arabinans.. It functions in the pathway glycan metabolism; L-arabinan degradation. Its function is as follows. Endo-1,5-alpha-L-arabinanase involved in degradation of pectin. Its preferred substrate is linear 1,5-alpha-L-arabinan. The sequence is that of Probable arabinan endo-1,5-alpha-L-arabinosidase A (abnA) from Aspergillus clavatus (strain ATCC 1007 / CBS 513.65 / DSM 816 / NCTC 3887 / NRRL 1 / QM 1276 / 107).